Reading from the N-terminus, the 198-residue chain is NAD(P)H dehydrogenase (quinone) (198 aa).

Positions 4-189 (ILVLYYSMYG…SIARYQGEYV (186 aa)) constitute a Flavodoxin-like domain. FMN contacts are provided by residues 10 to 15 (SMYGHI) and 78 to 80 (TRF). Position 12 (tyrosine 12) interacts with NAD(+). Position 98 (tryptophan 98) interacts with substrate. Residues 113–118 (STGTGG) and histidine 133 each bind FMN.

It belongs to the WrbA family. FMN serves as cofactor.

The catalysed reaction is a quinone + NADH + H(+) = a quinol + NAD(+). The enzyme catalyses a quinone + NADPH + H(+) = a quinol + NADP(+). The chain is NAD(P)H dehydrogenase (quinone) from Salmonella agona (strain SL483).